We begin with the raw amino-acid sequence, 217 residues long: GrpE protein homolog 1, mitochondrial (217 aa).

The N-terminal 27 residues, 1–27 (MAARCVRLARRSLPALALSFRPSPRLL), are a transit peptide targeting the mitochondrion. Lys-94 carries the N6-acetyllysine; alternate modification. At Lys-94 the chain carries N6-succinyllysine; alternate. The residue at position 100 (Lys-100) is an N6-acetyllysine. Lys-120 bears the N6-succinyllysine mark. Lys-215 carries the N6-acetyllysine; alternate modification. Lys-215 carries the post-translational modification N6-succinyllysine; alternate.

Belongs to the GrpE family. In terms of assembly, probable component of the PAM complex at least composed of a mitochondrial HSP70 protein, GRPEL1 or GRPEL2, TIMM44, TIMM16/PAM16 and TIMM14/DNAJC19. Binds to HSP70, HSC70 and HSJ1B. In terms of tissue distribution, ubiquitous. Particularly abundant in heart, kidney and liver.

The protein resides in the mitochondrion matrix. In terms of biological role, essential component of the PAM complex, a complex required for the translocation of transit peptide-containing proteins from the inner membrane into the mitochondrial matrix in an ATP-dependent manner. Seems to control the nucleotide-dependent binding of mitochondrial HSP70 to substrate proteins. This Rattus norvegicus (Rat) protein is GrpE protein homolog 1, mitochondrial (Grpel1).